The sequence spans 443 residues: ATP-dependent protease ATPase subunit HslU (443 aa).

Residues isoleucine 18, 60–65, aspartate 256, glutamate 321, and arginine 393 contribute to the ATP site; that span reads GVGKTE.

The protein belongs to the ClpX chaperone family. HslU subfamily. In terms of assembly, a double ring-shaped homohexamer of HslV is capped on each side by a ring-shaped HslU homohexamer. The assembly of the HslU/HslV complex is dependent on binding of ATP.

Its subcellular location is the cytoplasm. ATPase subunit of a proteasome-like degradation complex; this subunit has chaperone activity. The binding of ATP and its subsequent hydrolysis by HslU are essential for unfolding of protein substrates subsequently hydrolyzed by HslV. HslU recognizes the N-terminal part of its protein substrates and unfolds these before they are guided to HslV for hydrolysis. This Buchnera aphidicola subsp. Schizaphis graminum (strain Sg) protein is ATP-dependent protease ATPase subunit HslU.